Here is a 679-residue protein sequence, read N- to C-terminus: Methionine--tRNA ligase (679 aa).

The 'HIGH' region signature appears at 14–24 (PYANGSIHLGH). Residues Cys145, Cys148, Cys158, and Cys161 each contribute to the Zn(2+) site. The 'KMSKS' region motif lies at 331–335 (KMSKS). Lys334 is an ATP binding site. A tRNA-binding domain is found at 577–679 (TFAAVDLRVA…SGAKPGQRIK (103 aa)).

Belongs to the class-I aminoacyl-tRNA synthetase family. MetG type 1 subfamily. Homodimer. Requires Zn(2+) as cofactor.

Its subcellular location is the cytoplasm. The enzyme catalyses tRNA(Met) + L-methionine + ATP = L-methionyl-tRNA(Met) + AMP + diphosphate. In terms of biological role, is required not only for elongation of protein synthesis but also for the initiation of all mRNA translation through initiator tRNA(fMet) aminoacylation. The sequence is that of Methionine--tRNA ligase from Pseudomonas putida (strain GB-1).